A 154-amino-acid polypeptide reads, in one-letter code: Cytochrome c-type biogenesis protein CcmE (154 aa).

Residues 1 to 8 (MHPQRKQR) are Cytoplasmic-facing. The chain crosses the membrane as a helical; Signal-anchor for type II membrane protein span at residues 9–29 (LMIVLFIVVFSSLAVGLIAYA). The Periplasmic segment spans residues 30–154 (LRENINLFYP…ATCGGLNYGA (125 aa)). His124 and Tyr128 together coordinate heme.

The protein belongs to the CcmE/CycJ family.

It localises to the cell inner membrane. Heme chaperone required for the biogenesis of c-type cytochromes. Transiently binds heme delivered by CcmC and transfers the heme to apo-cytochromes in a process facilitated by CcmF and CcmH. In Cellvibrio japonicus (strain Ueda107) (Pseudomonas fluorescens subsp. cellulosa), this protein is Cytochrome c-type biogenesis protein CcmE.